Reading from the N-terminus, the 760-residue chain is DEAD-box ATP-dependent RNA helicase 24 (760 aa).

Disordered stretches follow at residues 1–76 (MSNR…GEVD) and 90–113 (QEMKSAPPPKPKEKLERYKDDDDD). The span at 14-27 (NRQTSYSFERSQAP) shows a compositional bias: polar residues. Acidic residues predominate over residues 41 to 64 (NSEDADLDNIDYMENEEAEEDIEE). A compositionally biased stretch (basic and acidic residues) spans 99 to 109 (KPKEKLERYKD). A Phosphoserine modification is found at serine 160. The short motif at 228 to 256 (KTFEDCGFSSQIMSAIKKQAYEKPTAIQC) is the Q motif element. Residues 259 to 434 (LPIVLSGRDV…REILSDPIRV (176 aa)) enclose the Helicase ATP-binding domain. 272 to 279 (AKTGSGKT) contributes to the ATP binding site. The short motif at 382 to 385 (DEAD) is the DEAD box element. A Helicase C-terminal domain is found at 459 to 608 (KLPWLLEKLP…NVPPELTDLA (150 aa)). 3 disordered regions span residues 604–638 (LTDLAMKDGRFKSKRDGRKGGKKGRGGGGGNKGVR), 647–666 (GFSSESSRTPSSKAAPSRSG), and 706–760 (FVSG…GWDN). Positions 615-628 (KSKRDGRKGGKKGR) are enriched in basic residues. Over residues 629-638 (GGGGGNKGVR) the composition is skewed to gly residues. The span at 649 to 666 (SSESSRTPSSKAAPSRSG) shows a compositional bias: polar residues. The span at 707-716 (VSGGTIGGDM) shows a compositional bias: gly residues. Positions 718–732 (RTQSQAPPVAPTQNA) are enriched in polar residues. Low complexity predominate over residues 733-745 (SSHNSSQNHSQSS). Basic residues predominate over residues 750–760 (RERKRRSGWDN).

Belongs to the DEAD box helicase family.

It catalyses the reaction ATP + H2O = ADP + phosphate + H(+). This Arabidopsis thaliana (Mouse-ear cress) protein is DEAD-box ATP-dependent RNA helicase 24 (RH24).